Here is an 843-residue protein sequence, read N- to C-terminus: KN motif and ankyrin repeat domain-containing protein 2 (843 aa).

Residues 1–31 (MAQVLHVPAPFPGTPGQASPAAFPSKEPDPP) are disordered. The tract at residues 1 to 72 (MAQVLHVPAP…AVQRRPRLGS (72 aa)) is interaction with AIFM1. A phosphoserine mark is found at Ser-19, Ser-83, Ser-86, Ser-89, and Ser-92. Position 105 is an omega-N-methylarginine (Arg-105). The segment at 161-182 (LAGVGLLPPTPRSSGLSTPVAP) is disordered. Thr-170 is subject to Phosphothreonine. Coiled coils occupy residues 183–234 (SAGH…QLKS) and 282–313 (DGEA…TQQV). Thr-331 is modified (phosphothreonine). Ser-358 carries the post-translational modification Phosphoserine. The tract at residues 410–577 (TERSCTGAPR…VASGPDPEEE (168 aa)) is disordered. The segment covering 457 to 470 (AAASQDSQAADGAG) has biased composition (low complexity). The residue at position 532 (Ser-532) is a Phosphoserine. A compositionally biased stretch (polar residues) spans 547–561 (ATTSLEGPQLSQESQ). Residues 606–643 (RELKVAYTTVLQEWLRLACRSDAHPELVRRHLVTFRAM) form an ANK 0; degenerate repeat. The interaction with NCOA1 stretch occupies residues 661–827 (TALHYSVSHA…YSRMNIKCSF (167 aa)). 5 ANK repeats span residues 673-703 (PVVR…TALA), 707-740 (TQDD…LAVS), 745-774 (DVVR…ACEH), 778-808 (EITG…ALDA), and 812-842 (EIAS…SSAE).

In terms of assembly, interacts (non-phosphorylated form) with NCOA1; NCOA2 AND NCOA3. Interacts with AIFM1. Interacts with ARHGDIA; the interaction is direct and may regulate the interaction of ARHGDIA with RHOA, RAC1 and CDC42. Interacts (via ANK repeats 1-5) with KIF21A (via residues 1148-1169). Phosphorylated by casein kinase II upon estrogen stimulation. Phosphorylation induces the release by KANK2 of NCOA1 and its translocation to the nucleus where NCOA1 can activate gene transcription. As to expression, widely expressed with highest levels in liver and skeletal muscle.

It is found in the cytoplasm. Its subcellular location is the mitochondrion. Involved in transcription regulation by sequestering in the cytoplasm nuclear receptor coactivators such as NCOA1, NCOA2 and NCOA3. Involved in regulation of caspase-independent apoptosis by sequestering the proapoptotic factor AIFM1 in mitochondria. Pro-apoptotic stimuli can induce its proteasomal degradation allowing the translocation of AIFM1 to the nucleus to induce apoptosis. Involved in the negative control of vitamin D receptor signaling pathway. Involved in actin stress fibers formation through its interaction with ARHGDIA and the regulation of the Rho signaling pathway. May thereby play a role in cell adhesion and migration, regulating for instance podocytes migration during development of the kidney. Through the Rho signaling pathway may also regulate cell proliferation. The protein is KN motif and ankyrin repeat domain-containing protein 2 (Kank2) of Mus musculus (Mouse).